We begin with the raw amino-acid sequence, 786 residues long: Endonuclease MutS2 (786 aa).

335–342 contributes to the ATP binding site; that stretch reads GPNTGGKT. Positions 711–786 constitute a Smr domain; the sequence is LDLRGERFEN…GLGVTVVELK (76 aa).

Belongs to the DNA mismatch repair MutS family. MutS2 subfamily. As to quaternary structure, homodimer. Binds to stalled ribosomes, contacting rRNA.

In terms of biological role, endonuclease that is involved in the suppression of homologous recombination and thus may have a key role in the control of bacterial genetic diversity. Its function is as follows. Acts as a ribosome collision sensor, splitting the ribosome into its 2 subunits. Detects stalled/collided 70S ribosomes which it binds and splits by an ATP-hydrolysis driven conformational change. Acts upstream of the ribosome quality control system (RQC), a ribosome-associated complex that mediates the extraction of incompletely synthesized nascent chains from stalled ribosomes and their subsequent degradation. Probably generates substrates for RQC. This Bacillus cereus (strain AH820) protein is Endonuclease MutS2.